Here is a 303-residue protein sequence, read N- to C-terminus: UDP-3-O-acyl-N-acetylglucosamine deacetylase (303 aa).

Zn(2+)-binding residues include His78, His237, and Asp241. His264 acts as the Proton donor in catalysis.

This sequence belongs to the LpxC family. Zn(2+) is required as a cofactor.

The enzyme catalyses a UDP-3-O-[(3R)-3-hydroxyacyl]-N-acetyl-alpha-D-glucosamine + H2O = a UDP-3-O-[(3R)-3-hydroxyacyl]-alpha-D-glucosamine + acetate. It functions in the pathway glycolipid biosynthesis; lipid IV(A) biosynthesis; lipid IV(A) from (3R)-3-hydroxytetradecanoyl-[acyl-carrier-protein] and UDP-N-acetyl-alpha-D-glucosamine: step 2/6. In terms of biological role, catalyzes the hydrolysis of UDP-3-O-myristoyl-N-acetylglucosamine to form UDP-3-O-myristoylglucosamine and acetate, the committed step in lipid A biosynthesis. The polypeptide is UDP-3-O-acyl-N-acetylglucosamine deacetylase (Pseudomonas paraeruginosa (strain DSM 24068 / PA7) (Pseudomonas aeruginosa (strain PA7))).